The sequence spans 696 residues: uncharacterized protein (696 aa).

10 helical membrane-spanning segments follow: residues 38–58 (IISIISGIFIGLTAALLNALA), 107–127 (LIYVSVSVGFAFIATTLGYVV), 215–235 (AMASGIAASFNAPVGGVIFAL), 245–265 (SLFTGSIWYEFLCSASSVVAL), 292–312 (TLPFIFISILCGCLGSVLIYL), 329–349 (VFFVIFLSLITSLTAYAILGE), 380–400 (FWVTAIVLFTSALLGLLLTSA), 402–422 (FGAAIPTGIIVPSLAIGACIG), 433–453 (FPSLAGTSIYGVIGSIAFLSS), and 457–477 (LVVALVVILFELTGALNIALP). 2 CBS domains span residues 527 to 587 (RSPE…PMSS) and 617 to 674 (IHPT…THTG).

Belongs to the chloride channel (TC 2.A.49) family.

The protein resides in the membrane. Functionally, voltage-gated chloride channel. This is an uncharacterized protein from Schizosaccharomyces pombe (strain 972 / ATCC 24843) (Fission yeast).